A 571-amino-acid polypeptide reads, in one-letter code: Proline--tRNA ligase (571 aa).

It belongs to the class-II aminoacyl-tRNA synthetase family. ProS type 1 subfamily. Homodimer.

Its subcellular location is the cytoplasm. The enzyme catalyses tRNA(Pro) + L-proline + ATP = L-prolyl-tRNA(Pro) + AMP + diphosphate. Its function is as follows. Catalyzes the attachment of proline to tRNA(Pro) in a two-step reaction: proline is first activated by ATP to form Pro-AMP and then transferred to the acceptor end of tRNA(Pro). As ProRS can inadvertently accommodate and process non-cognate amino acids such as alanine and cysteine, to avoid such errors it has two additional distinct editing activities against alanine. One activity is designated as 'pretransfer' editing and involves the tRNA(Pro)-independent hydrolysis of activated Ala-AMP. The other activity is designated 'posttransfer' editing and involves deacylation of mischarged Ala-tRNA(Pro). The misacylated Cys-tRNA(Pro) is not edited by ProRS. This chain is Proline--tRNA ligase, found in Glaesserella parasuis serovar 5 (strain SH0165) (Haemophilus parasuis).